Here is a 126-residue protein sequence, read N- to C-terminus: Protein ApaG (126 aa).

The 125-residue stretch at 2–126 (TSLEDSIKVE…FRLAVPGMLH (125 aa)) folds into the ApaG domain.

This Shewanella sediminis (strain HAW-EB3) protein is Protein ApaG.